Consider the following 295-residue polypeptide: Pyridoxal 5'-phosphate synthase subunit PdxS (295 aa).

Aspartate 25 is a binding site for D-ribose 5-phosphate. Lysine 82 serves as the catalytic Schiff-base intermediate with D-ribose 5-phosphate. Glycine 154 provides a ligand contact to D-ribose 5-phosphate. Arginine 166 provides a ligand contact to D-glyceraldehyde 3-phosphate. D-ribose 5-phosphate is bound by residues glycine 215 and glycine 236–serine 237.

This sequence belongs to the PdxS/SNZ family. In terms of assembly, in the presence of PdxT, forms a dodecamer of heterodimers.

The enzyme catalyses aldehydo-D-ribose 5-phosphate + D-glyceraldehyde 3-phosphate + L-glutamine = pyridoxal 5'-phosphate + L-glutamate + phosphate + 3 H2O + H(+). It participates in cofactor biosynthesis; pyridoxal 5'-phosphate biosynthesis. Functionally, catalyzes the formation of pyridoxal 5'-phosphate from ribose 5-phosphate (RBP), glyceraldehyde 3-phosphate (G3P) and ammonia. The ammonia is provided by the PdxT subunit. Can also use ribulose 5-phosphate and dihydroxyacetone phosphate as substrates, resulting from enzyme-catalyzed isomerization of RBP and G3P, respectively. The chain is Pyridoxal 5'-phosphate synthase subunit PdxS from Dictyoglomus turgidum (strain DSM 6724 / Z-1310).